Here is a 96-residue protein sequence, read N- to C-terminus: Aspartyl/glutamyl-tRNA(Asn/Gln) amidotransferase subunit C (96 aa).

Belongs to the GatC family. In terms of assembly, heterotrimer of A, B and C subunits.

The enzyme catalyses L-glutamyl-tRNA(Gln) + L-glutamine + ATP + H2O = L-glutaminyl-tRNA(Gln) + L-glutamate + ADP + phosphate + H(+). The catalysed reaction is L-aspartyl-tRNA(Asn) + L-glutamine + ATP + H2O = L-asparaginyl-tRNA(Asn) + L-glutamate + ADP + phosphate + 2 H(+). Its function is as follows. Allows the formation of correctly charged Asn-tRNA(Asn) or Gln-tRNA(Gln) through the transamidation of misacylated Asp-tRNA(Asn) or Glu-tRNA(Gln) in organisms which lack either or both of asparaginyl-tRNA or glutaminyl-tRNA synthetases. The reaction takes place in the presence of glutamine and ATP through an activated phospho-Asp-tRNA(Asn) or phospho-Glu-tRNA(Gln). This chain is Aspartyl/glutamyl-tRNA(Asn/Gln) amidotransferase subunit C, found in Bacillus cytotoxicus (strain DSM 22905 / CIP 110041 / 391-98 / NVH 391-98).